The following is a 49-amino-acid chain: Sperm protamine P1 (49 aa).

A disordered region spans residues 1 to 49 (MARYRCCRSHSRSRCRRRRRRSRRRRRRSCGRRRRAGYRRYTVRYRRRR).

It belongs to the protamine P1 family. In terms of tissue distribution, testis.

The protein resides in the nucleus. The protein localises to the chromosome. In terms of biological role, protamines substitute for histones in the chromatin of sperm during the haploid phase of spermatogenesis. They compact sperm DNA into a highly condensed, stable and inactive complex. This is Sperm protamine P1 (PRM1) from Macronycteris commersonii (Commerson's roundleaf bat).